Consider the following 273-residue polypeptide: MALKNFNPITPSLRELVQVDKTNLWKGRPLKTLTKGMSKTGGRNQQGRITSWHRGGGHKKLYRVIDFKRKKIDISAIVERIEYDPNRTAFIALIKYDDGEYSYILAPQKLSIGDRVISSQAADIKIGNCLPLKSIPIGTTLHNVEMKIGKGGQIARSAGTSVELVGKDSGYAQIKLRSGEFRLVPLDCKATIGSISNPDQKNINLGKAGRNRWLGWRPHVRGVAMNPVDHPHGGGEGKTSGGRHPVTPWGFSTKGKKTRKNKRTSKFIVKKRK.

Positions 228–273 (VDHPHGGGEGKTSGGRHPVTPWGFSTKGKKTRKNKRTSKFIVKKRK) are disordered. Residues 254–273 (KGKKTRKNKRTSKFIVKKRK) are compositionally biased toward basic residues.

The protein belongs to the universal ribosomal protein uL2 family. As to quaternary structure, part of the 50S ribosomal subunit. Forms a bridge to the 30S subunit in the 70S ribosome.

One of the primary rRNA binding proteins. Required for association of the 30S and 50S subunits to form the 70S ribosome, for tRNA binding and peptide bond formation. It has been suggested to have peptidyltransferase activity; this is somewhat controversial. Makes several contacts with the 16S rRNA in the 70S ribosome. This Rickettsia prowazekii (strain Madrid E) protein is Large ribosomal subunit protein uL2.